The chain runs to 252 residues: NAC domain-containing protein 23 (252 aa).

The region spanning 12–177 (MPPGFRFQPT…EMVLCRISNK (166 aa)) is the NAC domain. Residues 110–183 (TAVKRRFVFY…ISNKDLPKPP (74 aa)) mediate DNA binding. Positions 225–252 (VDDAAAGTDDPGDLDEEIDDSMQRNHGG) are disordered. Acidic residues predominate over residues 234 to 244 (DPGDLDEEIDD).

As to quaternary structure, forms heterodimers with NAC26. As to expression, expressed in stems and panicles. Expressed in developing endosperm.

It is found in the nucleus. It localises to the cytoplasm. In terms of biological role, transcription factor involved in the regulation of seed size. Binds to DNA-specific sequences of CLPD1 and OAT promoters in vitro. This Oryza sativa subsp. japonica (Rice) protein is NAC domain-containing protein 23.